The chain runs to 257 residues: Thiazole synthase (257 aa).

Lysine 96 acts as the Schiff-base intermediate with DXP in catalysis. Residues glycine 157, 184 to 185, and 206 to 207 each bind 1-deoxy-D-xylulose 5-phosphate; these read AG and NT.

The protein belongs to the ThiG family. In terms of assembly, homotetramer. Forms heterodimers with either ThiH or ThiS.

The protein localises to the cytoplasm. It carries out the reaction [ThiS sulfur-carrier protein]-C-terminal-Gly-aminoethanethioate + 2-iminoacetate + 1-deoxy-D-xylulose 5-phosphate = [ThiS sulfur-carrier protein]-C-terminal Gly-Gly + 2-[(2R,5Z)-2-carboxy-4-methylthiazol-5(2H)-ylidene]ethyl phosphate + 2 H2O + H(+). The protein operates within cofactor biosynthesis; thiamine diphosphate biosynthesis. In terms of biological role, catalyzes the rearrangement of 1-deoxy-D-xylulose 5-phosphate (DXP) to produce the thiazole phosphate moiety of thiamine. Sulfur is provided by the thiocarboxylate moiety of the carrier protein ThiS. In vitro, sulfur can be provided by H(2)S. The chain is Thiazole synthase from Bartonella bacilliformis (strain ATCC 35685 / KC583 / Herrer 020/F12,63).